The following is a 1196-amino-acid chain: Nucleolar protein 6 (1196 aa).

Disordered stretches follow at residues 1–74 (MPGK…NVKP) and 1140–1196 (KREQ…KALK). Composition is skewed to basic and acidic residues over residues 22-31 (HAEDHSDLEH) and 65-74 (HRGDTKNVKP). Residues 1165–1187 (KPKKHGKRKGTGKAAPPKKKRLI) are compositionally biased toward basic residues.

The protein belongs to the NRAP family. Part of the small subunit (SSU) processome, composed of more than 70 proteins and the RNA chaperone small nucleolar RNA (snoRNA) U3.

The protein localises to the nucleus. The protein resides in the nucleolus. Its subcellular location is the chromosome. Functionally, part of the small subunit (SSU) processome, first precursor of the small eukaryotic ribosomal subunit. During the assembly of the SSU processome in the nucleolus, many ribosome biogenesis factors, an RNA chaperone and ribosomal proteins associate with the nascent pre-rRNA and work in concert to generate RNA folding, modifications, rearrangements and cleavage as well as targeted degradation of pre-ribosomal RNA by the RNA exosome. The polypeptide is Nucleolar protein 6 (Drosophila simulans (Fruit fly)).